An 86-amino-acid chain; its full sequence is uncharacterized protein (86 aa).

The segment at 1-21 (MLSNSTSRNRHSKHNKKNTRE) is disordered. Over residues 8-17 (RNRHSKHNKK) the composition is skewed to basic residues.

This is an uncharacterized protein from Acidianus convivator (ATV).